The sequence spans 92 residues: C-C motif chemokine 3 (92 aa).

The first 23 residues, 1-23, serve as a signal peptide directing secretion; that stretch reads MQVSTAALAVLLCTMALCNQFSA. Disulfide bonds link Cys33-Cys57 and Cys34-Cys73.

It belongs to the intercrine beta (chemokine CC) family. Self-associates. Also heterodimer of MIP-1-alpha(4-69) and MIP-1-beta(3-69). Interacts with CCR1.

The protein resides in the secreted. Functionally, monokine with inflammatory and chemokinetic properties. Binds to CCR1, CCR4 and CCR5. One of the major HIV-suppressive factors produced by CD8+ T-cells. Recombinant MIP-1-alpha induces a dose-dependent inhibition of different strains of HIV-1, HIV-2, and simian immunodeficiency virus (SIV). The chain is C-C motif chemokine 3 (CCL3) from Pan troglodytes (Chimpanzee).